Consider the following 387-residue polypeptide: 4-hydroxy-3-methylbut-2-en-1-yl diphosphate synthase (flavodoxin) (387 aa).

Positions 280, 283, 315, and 322 each coordinate [4Fe-4S] cluster.

Belongs to the IspG family. It depends on [4Fe-4S] cluster as a cofactor.

The enzyme catalyses (2E)-4-hydroxy-3-methylbut-2-enyl diphosphate + oxidized [flavodoxin] + H2O + 2 H(+) = 2-C-methyl-D-erythritol 2,4-cyclic diphosphate + reduced [flavodoxin]. Its pathway is isoprenoid biosynthesis; isopentenyl diphosphate biosynthesis via DXP pathway; isopentenyl diphosphate from 1-deoxy-D-xylulose 5-phosphate: step 5/6. Converts 2C-methyl-D-erythritol 2,4-cyclodiphosphate (ME-2,4cPP) into 1-hydroxy-2-methyl-2-(E)-butenyl 4-diphosphate. This Mycobacterium bovis (strain BCG / Pasteur 1173P2) protein is 4-hydroxy-3-methylbut-2-en-1-yl diphosphate synthase (flavodoxin).